The chain runs to 255 residues: Small ribosomal subunit protein uS2 (255 aa).

The protein belongs to the universal ribosomal protein uS2 family.

The chain is Small ribosomal subunit protein uS2 from Geotalea daltonii (strain DSM 22248 / JCM 15807 / FRC-32) (Geobacter daltonii).